The primary structure comprises 97 residues: uncharacterized protein (97 aa).

The next 3 membrane-spanning stretches (helical) occupy residues 7–27 (CIAPLIYLVFGVSSTWLIGLG), 34–54 (IPMLIISLCAFAYGFWLLMFS), and 69–89 (IVLYWIVFIVMIFFLTYPTIL).

The protein resides in the cell membrane. This is an uncharacterized protein from Haemophilus influenzae (strain ATCC 51907 / DSM 11121 / KW20 / Rd).